Here is a 345-residue protein sequence, read N- to C-terminus: Phosphoribosylformylglycinamidine cyclo-ligase (345 aa).

The protein belongs to the AIR synthase family.

The protein localises to the cytoplasm. The enzyme catalyses 2-formamido-N(1)-(5-O-phospho-beta-D-ribosyl)acetamidine + ATP = 5-amino-1-(5-phospho-beta-D-ribosyl)imidazole + ADP + phosphate + H(+). It functions in the pathway purine metabolism; IMP biosynthesis via de novo pathway; 5-amino-1-(5-phospho-D-ribosyl)imidazole from N(2)-formyl-N(1)-(5-phospho-D-ribosyl)glycinamide: step 2/2. This is Phosphoribosylformylglycinamidine cyclo-ligase from Salmonella typhi.